The following is a 391-amino-acid chain: 3-ketoacyl-CoA thiolase, peroxisomal (391 aa).

C92 serves as the catalytic Acyl-thioester intermediate. Active-site proton acceptor residues include H335 and C366.

Belongs to the thiolase-like superfamily. Thiolase family. As to quaternary structure, homodimer.

It localises to the peroxisome. It carries out the reaction an acyl-CoA + acetyl-CoA = a 3-oxoacyl-CoA + CoA. It participates in lipid metabolism; fatty acid metabolism. This Encephalitozoon cuniculi (strain GB-M1) (Microsporidian parasite) protein is 3-ketoacyl-CoA thiolase, peroxisomal (FOX3).